A 268-amino-acid polypeptide reads, in one-letter code: Unknown seed protein 30.1 (268 aa).

The first 22 residues, 1–22, serve as a signal peptide directing secretion; it reads MEFAHLTVLSLFCLAFVGITAT. A BURP domain is found at 68 to 259; it reads LFFEHDLHPR…GNKAAAWVPN (192 aa).

In Vicia faba (Broad bean), this protein is Unknown seed protein 30.1.